A 492-amino-acid chain; its full sequence is Aspartyl/glutamyl-tRNA(Asn/Gln) amidotransferase subunit B (492 aa).

This sequence belongs to the GatB/GatE family. GatB subfamily. Heterotrimer of A, B and C subunits.

It carries out the reaction L-glutamyl-tRNA(Gln) + L-glutamine + ATP + H2O = L-glutaminyl-tRNA(Gln) + L-glutamate + ADP + phosphate + H(+). The catalysed reaction is L-aspartyl-tRNA(Asn) + L-glutamine + ATP + H2O = L-asparaginyl-tRNA(Asn) + L-glutamate + ADP + phosphate + 2 H(+). Its function is as follows. Allows the formation of correctly charged Asn-tRNA(Asn) or Gln-tRNA(Gln) through the transamidation of misacylated Asp-tRNA(Asn) or Glu-tRNA(Gln) in organisms which lack either or both of asparaginyl-tRNA or glutaminyl-tRNA synthetases. The reaction takes place in the presence of glutamine and ATP through an activated phospho-Asp-tRNA(Asn) or phospho-Glu-tRNA(Gln). This Pelagibacter ubique (strain HTCC1062) protein is Aspartyl/glutamyl-tRNA(Asn/Gln) amidotransferase subunit B.